We begin with the raw amino-acid sequence, 1024 residues long: Beta-galactosidase (1024 aa).

Asn100 and Asp198 together coordinate substrate. Residue Asp198 coordinates Na(+). Residues Glu414, His416, and Glu459 each contribute to the Mg(2+) site. Residues Glu459 and 535-538 (EYAH) each bind substrate. Glu459 (proton donor) is an active-site residue. Glu535 functions as the Nucleophile in the catalytic mechanism. Asn595 serves as a coordination point for Mg(2+). 2 residues coordinate Na(+): Phe599 and Asn602. Residues Asn602 and Trp995 each contribute to the substrate site.

The protein belongs to the glycosyl hydrolase 2 family. Homotetramer. The cofactor is Mg(2+). Na(+) serves as cofactor.

The enzyme catalyses Hydrolysis of terminal non-reducing beta-D-galactose residues in beta-D-galactosides.. This Vibrio cholerae serotype O1 (strain ATCC 39541 / Classical Ogawa 395 / O395) protein is Beta-galactosidase.